We begin with the raw amino-acid sequence, 125 residues long: Small ribosomal subunit protein eS8 (125 aa).

Residues 1-35 (MQWQGRSVRKPSGGRYHTSQGKKRTEIGRAPAETH) are disordered.

This sequence belongs to the eukaryotic ribosomal protein eS8 family. Part of the 30S ribosomal subunit.

The chain is Small ribosomal subunit protein eS8 from Methanoculleus marisnigri (strain ATCC 35101 / DSM 1498 / JR1).